Consider the following 217-residue polypeptide: 3,4-dihydroxy-2-butanone 4-phosphate synthase (217 aa).

D-ribulose 5-phosphate contacts are provided by residues R37–E38, D42, R150–T154, and E174. Position 38 (E38) interacts with Mg(2+). Mg(2+) is bound at residue H153.

The protein belongs to the DHBP synthase family. Homodimer. The cofactor is Mg(2+). Mn(2+) is required as a cofactor.

It carries out the reaction D-ribulose 5-phosphate = (2S)-2-hydroxy-3-oxobutyl phosphate + formate + H(+). The protein operates within cofactor biosynthesis; riboflavin biosynthesis; 2-hydroxy-3-oxobutyl phosphate from D-ribulose 5-phosphate: step 1/1. Its function is as follows. Catalyzes the conversion of D-ribulose 5-phosphate to formate and 3,4-dihydroxy-2-butanone 4-phosphate. This Aeromonas salmonicida (strain A449) protein is 3,4-dihydroxy-2-butanone 4-phosphate synthase.